The primary structure comprises 61 residues: Large ribosomal subunit protein bL28 (61 aa).

It belongs to the bacterial ribosomal protein bL28 family.

The polypeptide is Large ribosomal subunit protein bL28 (Nocardioides sp. (strain ATCC BAA-499 / JS614)).